Consider the following 197-residue polypeptide: Holliday junction branch migration complex subunit RuvA (197 aa).

The domain I stretch occupies residues 1–61 (MYEYFEGTIT…ENGMTLYGFK (61 aa)). The segment at 62–140 (SQQDKVLFNK…NYVAENLFTE (79 aa)) is domain II. The tract at residues 141–150 (DEPVESVFPA) is flexible linker. The domain III stretch occupies residues 150-197 (ALEDALLALGALGYSQKEVDRIKPKLKKLPEMSADEYIKQGLGFLLKK).

It belongs to the RuvA family. As to quaternary structure, homotetramer. Forms an RuvA(8)-RuvB(12)-Holliday junction (HJ) complex. HJ DNA is sandwiched between 2 RuvA tetramers; dsDNA enters through RuvA and exits via RuvB. An RuvB hexamer assembles on each DNA strand where it exits the tetramer. Each RuvB hexamer is contacted by two RuvA subunits (via domain III) on 2 adjacent RuvB subunits; this complex drives branch migration. In the full resolvosome a probable DNA-RuvA(4)-RuvB(12)-RuvC(2) complex forms which resolves the HJ.

The protein localises to the cytoplasm. The RuvA-RuvB-RuvC complex processes Holliday junction (HJ) DNA during genetic recombination and DNA repair, while the RuvA-RuvB complex plays an important role in the rescue of blocked DNA replication forks via replication fork reversal (RFR). RuvA specifically binds to HJ cruciform DNA, conferring on it an open structure. The RuvB hexamer acts as an ATP-dependent pump, pulling dsDNA into and through the RuvAB complex. HJ branch migration allows RuvC to scan DNA until it finds its consensus sequence, where it cleaves and resolves the cruciform DNA. This chain is Holliday junction branch migration complex subunit RuvA, found in Lactobacillus delbrueckii subsp. bulgaricus (strain ATCC BAA-365 / Lb-18).